The following is a 97-amino-acid chain: uncharacterized protein (97 aa).

This is an uncharacterized protein from Mycoplasma capricolum subsp. capricolum (strain California kid / ATCC 27343 / NCTC 10154).